The primary structure comprises 190 residues: UPF0340 protein BCE33L5016 (190 aa).

It belongs to the UPF0340 family.

The chain is UPF0340 protein BCE33L5016 from Bacillus cereus (strain ZK / E33L).